Reading from the N-terminus, the 665-residue chain is Probable potassium transport system protein Kup (665 aa).

Positions 1-18 are enriched in low complexity; that stretch reads MASEAPHASAPDCAPASS. The disordered stretch occupies residues 1–31; it reads MASEAPHASAPDCAPASSDIPQQDGGSTNGH. Helical transmembrane passes span 40–60, 83–103, 131–151, 171–191, 202–222, 245–265, 281–301, 332–352, 380–400, 409–429, 435–455, and 462–482; these read FFAL…TSPL, VVSL…VVFI, LVFV…VITP, GVTN…LFFI, LFGP…LMNL, GLTG…VEAL, WLFF…AFAL, LVLL…TGAF, IFVP…MFTF, AYGL…FIVM, WSMP…ITFL, and FFSG…IMAT.

This sequence belongs to the HAK/KUP transporter (TC 2.A.72) family.

It is found in the cell inner membrane. It carries out the reaction K(+)(in) + H(+)(in) = K(+)(out) + H(+)(out). In terms of biological role, transport of potassium into the cell. Likely operates as a K(+):H(+) symporter. This chain is Probable potassium transport system protein Kup, found in Caulobacter vibrioides (strain ATCC 19089 / CIP 103742 / CB 15) (Caulobacter crescentus).